A 515-amino-acid chain; its full sequence is Folate synthesis bifunctional protein, mitochondrial (515 aa).

The transit peptide at 1–28 (MSILKCLGVRGNQLCAARNYLKVLGFSS) directs the protein to the mitochondrion. The tract at residues 47-172 (VIALGSNVGD…PFVMAPLMDL (126 aa)) is HPPK. The 269-residue stretch at 230 to 498 (TLVMGILNLT…NVKDNLDAVK (269 aa)) folds into the Pterin-binding domain. Residues 232–515 (VMGILNLTPD…QKSSPIKFKQ (284 aa)) are DHPS. Asn-237 provides a ligand contact to Mg(2+). Residues Thr-277, Asp-314, Asn-333, Asp-406, Lys-451, and 486–488 (RVH) contribute to the (7,8-dihydropterin-6-yl)methyl diphosphate site.

It in the N-terminal section; belongs to the HPPK family. This sequence in the C-terminal section; belongs to the DHPS family. As to quaternary structure, homomultimer. Mg(2+) is required as a cofactor.

The protein localises to the mitochondrion. It catalyses the reaction 6-hydroxymethyl-7,8-dihydropterin + ATP = (7,8-dihydropterin-6-yl)methyl diphosphate + AMP + H(+). The catalysed reaction is (7,8-dihydropterin-6-yl)methyl diphosphate + 4-aminobenzoate = 7,8-dihydropteroate + diphosphate. Its pathway is cofactor biosynthesis; tetrahydrofolate biosynthesis; 2-amino-4-hydroxy-6-hydroxymethyl-7,8-dihydropteridine diphosphate from 7,8-dihydroneopterin triphosphate: step 4/4. It functions in the pathway cofactor biosynthesis; tetrahydrofolate biosynthesis; 7,8-dihydrofolate from 2-amino-4-hydroxy-6-hydroxymethyl-7,8-dihydropteridine diphosphate and 4-aminobenzoate: step 1/2. Functionally, catalyzes the first two consecutive steps of tetrahydrofolate biosynthesis. This Pisum sativum (Garden pea) protein is Folate synthesis bifunctional protein, mitochondrial.